The chain runs to 1046 residues: DNA-directed RNA polymerase subunit beta' (1046 aa).

Asp383, Asp385, and Asp387 together coordinate Mg(2+). Positions 752, 826, 833, and 836 each coordinate Zn(2+).

Belongs to the RNA polymerase beta' chain family. In terms of assembly, the RNAP catalytic core consists of 2 alpha, 1 beta, 1 beta' and 1 omega subunit. When a sigma factor is associated with the core the holoenzyme is formed, which can initiate transcription. It depends on Mg(2+) as a cofactor. The cofactor is Zn(2+).

The catalysed reaction is RNA(n) + a ribonucleoside 5'-triphosphate = RNA(n+1) + diphosphate. In terms of biological role, DNA-dependent RNA polymerase catalyzes the transcription of DNA into RNA using the four ribonucleoside triphosphates as substrates. The protein is DNA-directed RNA polymerase subunit beta' of Weissella hellenica.